Consider the following 483-residue polypeptide: Glutamyl-tRNA(Gln) amidotransferase subunit A (483 aa).

Catalysis depends on charge relay system residues Lys76 and Ser151. Ser175 acts as the Acyl-ester intermediate in catalysis.

This sequence belongs to the amidase family. GatA subfamily. In terms of assembly, heterotrimer of A, B and C subunits.

It carries out the reaction L-glutamyl-tRNA(Gln) + L-glutamine + ATP + H2O = L-glutaminyl-tRNA(Gln) + L-glutamate + ADP + phosphate + H(+). Functionally, allows the formation of correctly charged Gln-tRNA(Gln) through the transamidation of misacylated Glu-tRNA(Gln) in organisms which lack glutaminyl-tRNA synthetase. The reaction takes place in the presence of glutamine and ATP through an activated gamma-phospho-Glu-tRNA(Gln). This is Glutamyl-tRNA(Gln) amidotransferase subunit A from Pseudomonas fluorescens (strain SBW25).